The sequence spans 268 residues: Satratoxin biosynthesis SC1 cluster protein 4 (268 aa).

4 helical membrane-spanning segments follow: residues 34-54 (VWLV…VHIF), 78-98 (LFAI…GLAI), 113-133 (HLAG…IKIV), and 145-165 (AVIW…APIY).

It belongs to the SAT4 family.

The protein localises to the membrane. It functions in the pathway mycotoxin biosynthesis. In terms of biological role, part of the satratoxin SC1 cluster involved in the biosynthesis of satratoxins, trichothecene mycotoxins that are associated with human food poisonings. Satratoxins are suggested to be made by products of multiple gene clusters (SC1, SC2 and SC3) that encode 21 proteins in all, including polyketide synthases, acetyltransferases, and other enzymes expected to modify the trichothecene skeleton. SC1 encodes 10 proteins, SAT1 to SAT10. The largest are SAT8, which encodes a putative polyketide synthase (PKS) with a conventional non-reducing architecture, and SAT10, a putative protein containing four ankyrin repeats and thus may be involved in protein scaffolding. The putative short-chain reductase SAT3 may assist the PKS in some capacity. SAT6 contains a secretory lipase domain and acts probably as a trichothecene esterase. SAT5 encodes a putative acetyltransferase, and so, with SAT6, may affect endogenous protection from toxicity. The probable transcription factor SAT9 may regulate the expression of the SC1 cluster. SC2 encodes proteins SAT11 to SAT16, the largest of which encodes the putative reducing PKS SAT13. SAT11 is a cytochrome P450 monooxygenase, while SAT14 and SAT16 are probable acetyltransferases. The SC2 cluster may be regulated by the transcription factor SAT15. SC3 is a small cluster that encodes 5 proteins, SAT17 to SAT21. SAT21 is a putative MFS-type transporter which may have a role in exporting secondary metabolites. The four other proteins putatively encoded in SC3 include the taurine hydroxylase-like protein SAT17, the O-methyltransferase SAT18, the acetyltransferase SAT19, and the Cys6-type zinc finger SAT20, the latter being probably involved in regulation of SC3 expression. This Stachybotrys chartarum (strain CBS 109288 / IBT 7711) (Toxic black mold) protein is Satratoxin biosynthesis SC1 cluster protein 4.